The primary structure comprises 821 residues: Probable phosphoenolpyruvate synthase (821 aa).

The active-site Tele-phosphohistidine intermediate is the H444. Residues R543, R590, E687, G709, T710, N711, and D712 each contribute to the substrate site. E687 lines the Mg(2+) pocket. D712 is a binding site for Mg(2+). Residue C759 is the Proton donor of the active site.

Belongs to the PEP-utilizing enzyme family. It depends on Mg(2+) as a cofactor.

The catalysed reaction is pyruvate + ATP + H2O = phosphoenolpyruvate + AMP + phosphate + 2 H(+). It functions in the pathway carbohydrate biosynthesis; gluconeogenesis. Its function is as follows. Catalyzes the phosphorylation of pyruvate to phosphoenolpyruvate. The protein is Probable phosphoenolpyruvate synthase (ppsA) of Pyrococcus horikoshii (strain ATCC 700860 / DSM 12428 / JCM 9974 / NBRC 100139 / OT-3).